The sequence spans 95 residues: uncharacterized protein (95 aa).

In terms of domain architecture, ABM spans 2–92 (VREAAMLHIK…YTPFPTVEHF (91 aa)).

This is an uncharacterized protein from Bacillus subtilis (strain 168).